Reading from the N-terminus, the 117-residue chain is Large ribosomal subunit protein bL17 (117 aa).

Belongs to the bacterial ribosomal protein bL17 family. As to quaternary structure, part of the 50S ribosomal subunit. Contacts protein L32.

The protein is Large ribosomal subunit protein bL17 of Exiguobacterium sp. (strain ATCC BAA-1283 / AT1b).